Here is a 332-residue protein sequence, read N- to C-terminus: Azadirone synthase LFS (332 aa).

A Fe2OG dioxygenase domain is found at 181 to 286 (ANANYTNMFH…RYSTGTFICP (106 aa)). Positions 208, 210, and 269 each coordinate Fe cation. Arginine 277 lines the 2-oxoglutarate pocket.

This sequence belongs to the iron/ascorbate-dependent oxidoreductase family. Requires Fe(2+) as cofactor. Mainly expressed in petioles and, to a lower extent, in roots.

The enzyme catalyses (1S,3bR,4R,5aR,9aR,9bR,11aS)-1-(1-hydroxy-4-oxobutan-2-yl)-3b,6,6,9a,11a-pentamethyl-7-oxo-1H,2H,3bH,4H,5H,5aH,6H,7H,9aH,9bH,10H,11H,11aH-cyclopenta[a]phenanthren-4-yl acetate + 2-oxoglutarate + O2 = azadirone + succinate + CO2 + 2 H2O. It participates in secondary metabolite biosynthesis; terpenoid biosynthesis. Its function is as follows. 2-oxoglutarate-Fe(II) type oxidoreductase involved in the biosynthesis of limonoids triterpene natural products such as azadirachtin, an antifeedant widely used as bioinsecticide, and possessing many medicinal applications including anti-tumoral, anti-malarial, anti-rheumatic, antibacterial, anti-inflammatory, anti-pyretic and diuretic effects. Catalyzes the formation of azadirone. In Melia azedarach (Chinaberry tree), this protein is Azadirone synthase LFS.